We begin with the raw amino-acid sequence, 147 residues long: Hemoglobin subunit epsilon (147 aa).

Positions 3 to 147 (HFTAEEKSTI…VATALAHKYH (145 aa)) constitute a Globin domain. Phosphoserine is present on residues Ser-14 and Ser-51. Positions 64 and 93 each coordinate heme b.

This sequence belongs to the globin family. In terms of assembly, heterotetramer of two alpha chains and two epsilon chains in early embryonic hemoglobin Gower-2; two zeta chains and two epsilon chains in early embryonic hemoglobin Gower-1. In terms of tissue distribution, red blood cells.

In terms of biological role, the epsilon chain is a beta-type chain of early mammalian embryonic hemoglobin. This is Hemoglobin subunit epsilon (HBE1) from Cheirogaleus medius (Fat-tailed dwarf lemur).